The sequence spans 125 residues: Small ribosomal subunit protein uS13 (125 aa).

The span at 94–116 (GLPVRGQRTRTNARTRKGPRKAV) shows a compositional bias: basic residues. The interval 94–125 (GLPVRGQRTRTNARTRKGPRKAVRASSAKAGR) is disordered.

It belongs to the universal ribosomal protein uS13 family. Part of the 30S ribosomal subunit. Forms a loose heterodimer with protein S19. Forms two bridges to the 50S subunit in the 70S ribosome.

In terms of biological role, located at the top of the head of the 30S subunit, it contacts several helices of the 16S rRNA. In the 70S ribosome it contacts the 23S rRNA (bridge B1a) and protein L5 of the 50S subunit (bridge B1b), connecting the 2 subunits; these bridges are implicated in subunit movement. Contacts the tRNAs in the A and P-sites. This is Small ribosomal subunit protein uS13 from Nitrosospira multiformis (strain ATCC 25196 / NCIMB 11849 / C 71).